Here is a 245-residue protein sequence, read N- to C-terminus: 4-hydroxy-tetrahydrodipicolinate reductase (245 aa).

NAD(+) is bound by residues 7-12, 75-77, and 102-105; these read GARGKV, GTT, and APNF. Catalysis depends on H132, which acts as the Proton donor/acceptor. Position 133 (H133) interacts with (S)-2,3,4,5-tetrahydrodipicolinate. K136 serves as the catalytic Proton donor. Position 142-143 (142-143) interacts with (S)-2,3,4,5-tetrahydrodipicolinate; that stretch reads GT.

Belongs to the DapB family.

The protein resides in the cytoplasm. The catalysed reaction is (S)-2,3,4,5-tetrahydrodipicolinate + NAD(+) + H2O = (2S,4S)-4-hydroxy-2,3,4,5-tetrahydrodipicolinate + NADH + H(+). The enzyme catalyses (S)-2,3,4,5-tetrahydrodipicolinate + NADP(+) + H2O = (2S,4S)-4-hydroxy-2,3,4,5-tetrahydrodipicolinate + NADPH + H(+). Its pathway is amino-acid biosynthesis; L-lysine biosynthesis via DAP pathway; (S)-tetrahydrodipicolinate from L-aspartate: step 4/4. In terms of biological role, catalyzes the conversion of 4-hydroxy-tetrahydrodipicolinate (HTPA) to tetrahydrodipicolinate. The protein is 4-hydroxy-tetrahydrodipicolinate reductase of Mycolicibacterium vanbaalenii (strain DSM 7251 / JCM 13017 / BCRC 16820 / KCTC 9966 / NRRL B-24157 / PYR-1) (Mycobacterium vanbaalenii).